The sequence spans 388 residues: WD repeat-containing protein 55 (388 aa).

Positions 1–20 (MDPTCEESPAEDSNNEEEDL) are enriched in acidic residues. A disordered region spans residues 1–33 (MDPTCEESPAEDSNNEEEDLDSTKAAPRIRDTP). WD repeat units lie at residues 37–76 (VLEA…GETK), 83–122 (HHLK…LERR), 126–164 (AHSA…PLMD), 167–206 (QHEE…FELL), 209–248 (PQSG…ATSD), 251–290 (ALRA…VVGT), and 293–333 (QHAG…TVVV). S355 carries the phosphoserine modification. The tract at residues 364–388 (REDEEDAKAPEEVVRESDDDDDDSD) is disordered. A compositionally biased stretch (basic and acidic residues) spans 370–379 (AKAPEEVVRE).

Belongs to the WD repeat WDR55 family.

It is found in the nucleus. The protein localises to the nucleolus. Its subcellular location is the cytoplasm. In terms of biological role, nucleolar protein that acts as a modulator of rRNA synthesis. Plays a central role during organogenesis. In Mus musculus (Mouse), this protein is WD repeat-containing protein 55 (Wdr55).